The following is a 305-amino-acid chain: Polyamine aminopropyltransferase 2 (305 aa).

A PABS domain is found at 7–242; sequence WRFVAEWTSE…GLWGFVAASD (236 aa). Gln-36 contacts S-methyl-5'-thioadenosine. Spermidine-binding residues include His-67 and Glu-91. S-methyl-5'-thioadenosine is bound by residues Asp-111 and 143-144; that span reads DG. Asp-161 serves as the catalytic Proton acceptor. Position 170 (Pro-170) interacts with S-methyl-5'-thioadenosine.

Belongs to the spermidine/spermine synthase family. Homodimer or homotetramer.

The protein localises to the cytoplasm. The catalysed reaction is S-adenosyl 3-(methylsulfanyl)propylamine + propane-1,3-diamine = norspermidine + S-methyl-5'-thioadenosine + H(+). Functionally, involved in the biosynthesis of polyamines which are thought to support the growth of thermophilic microorganisms under high-temperature conditions. It seems that long-chain and branched-chain of polyamines effectively stabilize DNA and RNA, respectively. Catalyzes the irreversible transfer of a propylamine group from the amino donor S-adenosylmethioninamine (decarboxy-AdoMet) to 1,3-diaminopropane to yield sym-norspermidine (bis(3-aminopropyl)amine). It can also synthesize thermospermine from spermidine with a very low activity. The protein is Polyamine aminopropyltransferase 2 of Hyperthermus butylicus (strain DSM 5456 / JCM 9403 / PLM1-5).